Here is a 386-residue protein sequence, read N- to C-terminus: Aspergillopepsin-1 (386 aa).

An N-terminal signal peptide occupies residues 1 to 20; sequence MVVFSKVAAAAFGLSAVASA. A propeptide spans 21–69 (activation peptide); that stretch reads MPAAPPRQGFTINQLTRAIPKRTINLPAIYANALSKYGGNVPPHIQDAM. The Peptidase A1 domain maps to 85-383; it reads YLTPVAVGGT…DSEGPQLGFA (299 aa). D101 is an active-site residue. N130 is a glycosylation site (N-linked (GlcNAc...) asparagine). D275 is a catalytic residue. C311 and C346 are disulfide-bonded.

This sequence belongs to the peptidase A1 family. Monomer.

The protein localises to the secreted. The catalysed reaction is Hydrolysis of proteins with broad specificity. Generally favors hydrophobic residues in P1 and P1', but also accepts Lys in P1, which leads to activation of trypsinogen. Does not clot milk.. Secreted aspartic endopeptidase that allows assimilation of proteinaceous substrates. The scissile peptide bond is attacked by a nucleophilic water molecule activated by two aspartic residues in the active site. Shows a broad primary substrate specificity. Favors hydrophobic residues at the P1 and P1' positions, but also accepts a lysine residue in the P1 position, leading to the activation of trypsinogen and chymotrypsinogen A. In Emericella nidulans (strain FGSC A4 / ATCC 38163 / CBS 112.46 / NRRL 194 / M139) (Aspergillus nidulans), this protein is Aspergillopepsin-1.